Here is a 467-residue protein sequence, read N- to C-terminus: Venom prothrombin activator omicarin-C catalytic subunit (467 aa).

The N-terminal stretch at 1 to 20 (MAPQLLLCLILTFLWSLPEA) is a signal peptide. Residues 21–40 (ESNVFLKSKVANRFLQRTKR) constitute a propeptide that is removed on maturation. Positions 41–86 (ANSLFEEFRSGNIERECIEERCSKEEAREVFEDDEKTETFWNVYVD) constitute a Gla domain. 4-carboxyglutamate occurs at positions 46, 47, 54, 56, 59, 60, 65, 66, 69, 72, and 75. A disulfide bridge links C57 with C62. An EGF-like 1; calcium-binding domain is found at 86–122 (DGDQCSSNPCHYRGTCKDGIGSYTCTCLFGYEGKNCE). Intrachain disulfides connect C90-C101, C95-C110, C112-C121, C129-C140, C136-C149, C151-C164, C172-C329, C216-C221, C236-C252, C377-C391, and C402-C430. The O-linked (Hex...) serine glycan is linked to S92. One can recognise an EGF-like 2 domain in the interval 129-164 (CRVDNGNCWHFCKPVQNDIQCSCAEGYLLGEDGHSC). A propeptide spans 182 to 209 (REASLPDFVQSQNATLLKKSDNPSPDIR) (activation peptide). The Peptidase S1 domain maps to 210–454 (IVNGMDCKLG…FILWIKRIMR (245 aa)). H251 acts as the Charge relay system in catalysis. Residue N254 is glycosylated (N-linked (GlcNAc...) asparagine). D309 acts as the Charge relay system in catalysis. Catalysis depends on S406, which acts as the Charge relay system.

It belongs to the peptidase S1 family. Snake venom subfamily. Heterodimer of a light and a heavy chains; disulfide-linked. Is associated with omicarin-C non-catalytic subunit (AC Q58L90) in a non-covalent manner. Gamma-carboxyglutamate residues are formed by vitamin K dependent carboxylation. These residues are essential for the binding of calcium. As to expression, expressed by the venom gland.

The protein localises to the secreted. It catalyses the reaction Selective cleavage of Arg-|-Thr and then Arg-|-Ile bonds in prothrombin to form thrombin.. Activated by calcium and negatively charged phospholipids. Snake prothrombin activator that attacks the hemostatic system of prey. This catalytic subunit is functionally similar to blood coagulation factor Xa. It requires a non-catalytic subunit present in the venom, which is similar to coagulation factor Va, to be fully active. This Oxyuranus microlepidotus (Inland taipan) protein is Venom prothrombin activator omicarin-C catalytic subunit.